A 143-amino-acid chain; its full sequence is Large ribosomal subunit protein uL15 (143 aa).

2 stretches are compositionally biased toward basic residues: residues 1-13 (MIRKSKKITKMRG) and 23-38 (KKHRGAGHRGGRGNAG). The disordered stretch occupies residues 1-38 (MIRKSKKITKMRGSRTCGYGEAKKHRGAGHRGGRGNAG).

It belongs to the universal ribosomal protein uL15 family. In terms of assembly, part of the 50S ribosomal subunit.

Functionally, binds to the 23S rRNA. The polypeptide is Large ribosomal subunit protein uL15 (Methanococcus maripaludis (strain C6 / ATCC BAA-1332)).